A 329-amino-acid chain; its full sequence is MSAYIIETLIKILILVAVFSALGGFATYIERKVLAYFQRRLGPSYVGPFGLLQVAADGIKLFTKEDIIPQGANKLIFTLAPIIAMVSAFVSMAPIPFFPNFTLFGYEIKPIISDINIGFLFFLAVGAAGIYAPILAGLASNNKYSLIGSARATIQLLSFEVVSTLTILAPLMVVGSLSLVEINNYQSGGFLDWLVFKQPLAFILFLIASYAELNRTPFDLLEHEAEIVAGYCTEYSGLKWGMFFLAEYAHLFAFSFVISIVFFGGFNAWGFIPGGIAILIKVSFFVFLSMWVRATYPHVRPDQLMNMCWKIMLPLALLNIVLTGVIILI.

Transmembrane regions (helical) follow at residues 9–29, 42–62, 75–95, 117–137, 154–174, 188–208, 238–258, 269–291, and 309–329; these read LIKILILVAVFSALGGFATYI, GPSYVGPFGLLQVAADGIKLF, LIFTLAPIIAMVSAFVSMAPI, IGFLFFLAVGAAGIYAPILAG, IQLLSFEVVSTLTILAPLMVV, GGFLDWLVFKQPLAFILFLIA, LKWGMFFLAEYAHLFAFSFVI, WGFIPGGIAILIKVSFFVFLSMW, and WKIMLPLALLNIVLTGVIILI.

It belongs to the complex I subunit 1 family. As to quaternary structure, NDH-1 is composed of 14 different subunits. Subunits NuoA, H, J, K, L, M, N constitute the membrane sector of the complex.

The protein localises to the cell inner membrane. It carries out the reaction a quinone + NADH + 5 H(+)(in) = a quinol + NAD(+) + 4 H(+)(out). In terms of biological role, NDH-1 shuttles electrons from NADH, via FMN and iron-sulfur (Fe-S) centers, to quinones in the respiratory chain. The immediate electron acceptor for the enzyme in this species is believed to be ubiquinone. Couples the redox reaction to proton translocation (for every two electrons transferred, four hydrogen ions are translocated across the cytoplasmic membrane), and thus conserves the redox energy in a proton gradient. This subunit may bind ubiquinone. This chain is NADH-quinone oxidoreductase subunit H, found in Helicobacter acinonychis (strain Sheeba).